We begin with the raw amino-acid sequence, 111 residues long: MISTVALFWALFLVCVINMARYFSSLRALLVVLRGCDPLLYQYVDGGGFFTAHGQPSKQIRLVWYIYWQRYLDHHDDEFIRRCERVRRQFILTSALCGLVIISLIGLMIWH.

2 helical membrane passes run 1 to 21 (MIST…NMAR) and 90 to 110 (FILT…LMIW).

It belongs to the universal stress protein B family.

Its subcellular location is the cell inner membrane. The protein is Universal stress protein B of Cronobacter sakazakii (strain ATCC BAA-894) (Enterobacter sakazakii).